The primary structure comprises 784 residues: SWI/SNF complex subunit SWI3C homolog (784 aa).

Residues 1-10 (MPRKASSTSD) show a composition bias toward polar residues. The segment at 1–68 (MPRKASSTSD…PEDADDETLA (68 aa)) is disordered. Over residues 24–39 (ASPSPSNRSSAAAAAA) the composition is skewed to low complexity. Residues 43–66 (DDSDSAAVNEDDDSAVPEDADDET) are compositionally biased toward acidic residues. An SWIRM domain is found at 185-284 (HVVPKHSDWF…YLASGSVHRG (100 aa)). The ZZ-type; degenerate zinc-finger motif lies at 355–409 (LSESSCSYCLQPLTSLHYQSLKEADIALCSDCFHDARYITGHSSLDFQRIDGDND). Zn(2+) contacts are provided by Cys360, Cys363, Cys383, and Cys386. In terms of domain architecture, SANT spans 413–464 (NDGDSWTDQETLLLLEGIEKYNDNWNNIAEHVGTKSKAQCIYHFIRLPVEDG). Disordered stretches follow at residues 667-702 (LASP…SMPQ) and 760-784 (GMPN…SSVG). Over residues 675–695 (PGGSTSTMSSNPMSMSPRPMG) the composition is skewed to low complexity.

Interacts with LFR. Interacts with NMCP1.

The protein localises to the nucleus. Its subcellular location is the nucleoplasm. In terms of biological role, component of a multiprotein complex equivalent of the SWI/SNF complex, an ATP-dependent chromatin-remodeling complex, which is required for the positive and negative regulation of gene expression of a large number of genes. It changes chromatin structure by altering DNA-histone contacts within a nucleosome, leading eventually to a change in nucleosome position, thus facilitating or repressing binding of gene-specific transcription factors. May be involved in positive response to drought stress and modulation of root growth through its interaction with NMCP1. The polypeptide is SWI/SNF complex subunit SWI3C homolog (Oryza sativa subsp. japonica (Rice)).